A 388-amino-acid chain; its full sequence is L-arabinitol 4-dehydrogenase (388 aa).

Zn(2+) contacts are provided by Cys-55, His-80, Glu-81, Cys-110, Cys-113, Cys-116, Cys-124, and Glu-165. NAD(+)-binding positions include 192 to 193 (PI), Asp-213, Arg-218, Ile-293, and 317 to 319 (QYR).

This sequence belongs to the zinc-containing alcohol dehydrogenase family. Homotetramer. The cofactor is Zn(2+).

It catalyses the reaction L-arabinitol + NAD(+) = L-xylulose + NADH + H(+). It participates in carbohydrate degradation; L-arabinose degradation via L-arabinitol; D-xylulose 5-phosphate from L-arabinose (fungal route): step 2/5. Its function is as follows. Catalyzes the NAD-dependent oxidation of L-arabinitol to L-xylulose in the fungal L-arabinose catabolic pathway. L-arabinose catabolism is important for using plant material as a carbon source. NADP cannot act as a cosubstrate. This is L-arabinitol 4-dehydrogenase (lad) from Talaromyces emersonii (Thermophilic fungus).